The primary structure comprises 343 residues: Protein RecA (343 aa).

68–75 (GPESGGKT) provides a ligand contact to ATP.

It belongs to the RecA family.

The protein localises to the cytoplasm. In terms of biological role, can catalyze the hydrolysis of ATP in the presence of single-stranded DNA, the ATP-dependent uptake of single-stranded DNA by duplex DNA, and the ATP-dependent hybridization of homologous single-stranded DNAs. It interacts with LexA causing its activation and leading to its autocatalytic cleavage. This Syntrophus aciditrophicus (strain SB) protein is Protein RecA.